A 99-amino-acid chain; its full sequence is HTH-type transcriptional regulator YgaV (99 aa).

The HTH arsR-type domain maps to 7-99 (LQASAEQAAA…IATLKNVYCP (93 aa)). A DNA-binding region (H-T-H motif) is located at residues 41-64 (AGELTRITGLSASATSQHLARMRD).

With respect to regulation, in the presence of H(2)S, two cysteine residues form an intramolecular tetrasulfide bond, which attenuates the binding of YgaV to DNA. Both unmodified YgaV and sulfide-modified YgaV can probably function as either a repressor or an activator. Binds heme, which may influence the DNA-binding affinity. Transcriptional regulator that regulates large-scale gene expression in response to sulfide. May act as a global regulator responsible for redox homeostasis. It functions as both a repressor and an activator. In the absence of sulfide compounds, it negatively regulates many anaerobic respiratory genes, including formate, fumarate, lactate, nitrate and nitrite reductase genes. In the presence of hydrogen sulfide (H(2)S), YgaV activity is attenuated, leading to the expression of anaerobic respiratory and ROS scavenging genes, which contributes to redox homeostasis, reactive oxygen species (ROS) scavenging and antibiotic tolerance. It responds to H(2)O(2) scavenging and increases antibiotic tolerance under H(2)S-atmospheric conditions. It also negatively regulates its own expression by binding to the ygaVP promoter region. May also be involved in regulatory mechanisms that operate independently of sulfide. The protein is HTH-type transcriptional regulator YgaV (ygaV) of Escherichia coli (strain K12).